A 469-amino-acid polypeptide reads, in one-letter code: D-3-phosphoglycerate dehydrogenase 1 (469 aa).

Residues serine 22, serine 29, and serine 33 each carry the phosphoserine modification. Residues 208 to 209 (HI), aspartate 228, 285 to 287 (ASR), and aspartate 311 contribute to the NAD(+) site. Residue arginine 287 is part of the active site. Glutamate 316 is a catalytic residue. Histidine 347 serves as the catalytic Proton donor. Position 347–350 (347–350 (HIGG)) interacts with NAD(+). The ACT domain occupies 399–469 (RVLYIHQNVP…SAKISIRLLY (71 aa)).

It belongs to the D-isomer specific 2-hydroxyacid dehydrogenase family.

The catalysed reaction is (2R)-3-phosphoglycerate + NAD(+) = 3-phosphooxypyruvate + NADH + H(+). It catalyses the reaction (R)-2-hydroxyglutarate + NAD(+) = 2-oxoglutarate + NADH + H(+). It participates in amino-acid biosynthesis; L-serine biosynthesis; L-serine from 3-phospho-D-glycerate: step 1/3. In terms of biological role, catalyzes the reversible oxidation of 3-phospho-D-glycerate to 3-phosphonooxypyruvate, the first step of the phosphorylated L-serine biosynthesis pathway. Also catalyzes the reversible oxidation of 2-hydroxyglutarate to 2-oxoglutarate. In Saccharomyces cerevisiae (strain ATCC 204508 / S288c) (Baker's yeast), this protein is D-3-phosphoglycerate dehydrogenase 1 (SER3).